The following is a 528-amino-acid chain: GMP synthase [glutamine-hydrolyzing] (528 aa).

The 192-residue stretch at 13-204 (AIVILDFGSQ…VYHICGCEPD (192 aa)) folds into the Glutamine amidotransferase type-1 domain. The active-site Nucleophile is the C90. Catalysis depends on residues H178 and E180. The region spanning 205–403 (WTTTAFIEEA…LGLPEEIVRR (199 aa)) is the GMPS ATP-PPase domain. 232–238 (SGGVDSS) is a binding site for ATP.

As to quaternary structure, homodimer.

The catalysed reaction is XMP + L-glutamine + ATP + H2O = GMP + L-glutamate + AMP + diphosphate + 2 H(+). It participates in purine metabolism; GMP biosynthesis; GMP from XMP (L-Gln route): step 1/1. Catalyzes the synthesis of GMP from XMP. The protein is GMP synthase [glutamine-hydrolyzing] of Prochlorococcus marinus (strain MIT 9303).